Reading from the N-terminus, the 176-residue chain is MKASGTLREYKVVGRLLPSAKNPTPPLYRMRIFAPNHVVAKSRFWYFVSQLRKMKKANGETVYCGLVHEQSPLKVKNFGIWLRYDSRSGTHNMYREYRDLTTSGAVTQCYRDMGARHRARAHAIQIMKVQVIAANKCRRAAIKQFHDSKIKFPLPHRVLRRQHKPRFTTRRPQTFF.

It belongs to the eukaryotic ribosomal protein eL20 family. Component of the large ribosomal subunit.

It is found in the cytoplasm. Its function is as follows. Component of the large ribosomal subunit. The ribosome is a large ribonucleoprotein complex responsible for the synthesis of proteins in the cell. This is Large ribosomal subunit protein eL20 (rpl18a) from Ictalurus punctatus (Channel catfish).